Consider the following 377-residue polypeptide: MKIDYYEALGVTRTADDKTLKAAFRKLAMQYHPDRNPDDPEAERKFKEIGEAYETLKDPQKRAAYDRFGHAAFENGGMGGGFGNGFGGAGGFADIFEDIFGEMMGGGRRRSNGGRERGADLRYNMEVTLEEAYAGKTAQIRVPTSITCDECSGSGAKPGSQPTTCTMCSGSGRVRAAQGFFSVERTCPGCNGRGQIIKDPCEKCHGQGRVTQERSLSVNIPAGIEDGTRIRLAGEGEAGLRGGPAGDLYIFLSVKPHEFFQRDGADLYCKVPISMTTAALGGQFEVSTLDGTQTRVKVPEGTQNGKQFRLKGKGMPVLRQSVTGDLYIQIDIETPQNLSKRQRELLEEFEKLSSQENSPKSAGFFSRMKEFFEGIGE.

In terms of domain architecture, J spans 4-69; that stretch reads DYYEALGVTR…QKRAAYDRFG (66 aa). The segment at 135–213 adopts a CR-type zinc-finger fold; it reads GKTAQIRVPT…CHGQGRVTQE (79 aa). 8 residues coordinate Zn(2+): Cys-148, Cys-151, Cys-165, Cys-168, Cys-187, Cys-190, Cys-201, and Cys-204. 4 CXXCXGXG motif repeats span residues 148–155, 165–172, 187–194, and 201–208; these read CDECSGSG, CTMCSGSG, CPGCNGRG, and CEKCHGQG.

It belongs to the DnaJ family. In terms of assembly, homodimer. Zn(2+) is required as a cofactor.

It is found in the cytoplasm. Its function is as follows. Participates actively in the response to hyperosmotic and heat shock by preventing the aggregation of stress-denatured proteins and by disaggregating proteins, also in an autonomous, DnaK-independent fashion. Unfolded proteins bind initially to DnaJ; upon interaction with the DnaJ-bound protein, DnaK hydrolyzes its bound ATP, resulting in the formation of a stable complex. GrpE releases ADP from DnaK; ATP binding to DnaK triggers the release of the substrate protein, thus completing the reaction cycle. Several rounds of ATP-dependent interactions between DnaJ, DnaK and GrpE are required for fully efficient folding. Also involved, together with DnaK and GrpE, in the DNA replication of plasmids through activation of initiation proteins. This chain is Chaperone protein DnaJ, found in Brucella canis (strain ATCC 23365 / NCTC 10854 / RM-666).